An 84-amino-acid chain; its full sequence is uncharacterized protein (84 aa).

This is an uncharacterized protein from Azorhizobium caulinodans (strain ATCC 43989 / DSM 5975 / JCM 20966 / LMG 6465 / NBRC 14845 / NCIMB 13405 / ORS 571).